Reading from the N-terminus, the 221-residue chain is NEDD4 family-interacting protein 1 (221 aa).

The residue at position 2 (alanine 2) is an N-acetylalanine. The segment at 2–41 (ALALAALAAVEPACGSGYQQLQNEEEPGEPEQTAGDAPPP) is interaction with UBE2L3. The Cytoplasmic segment spans residues 2-116 (ALALAALAAV…TDQLRIGNDG (115 aa)). A disordered region spans residues 18 to 44 (GYQQLQNEEEPGEPEQTAGDAPPPYSS). 3 short sequence motifs (PPxY motif) span residues 39–42 (PPPY), 64–67 (PPSY), and 74–76 (PSY). The tract at residues 42–76 (YSSITAESAAYFDYKDESGFPKPPSYNVATTLPSY) is interaction with ITCH. Residues 117–137 (IFMLTFFMAFLFNWIGFFLSF) traverse the membrane as a helical segment. Residues 138-143 (CLTTSA) are Extracellular-facing. A helical membrane pass occupies residues 144 to 164 (AGRYGAISGFGLSLIKWILIV). The Cytoplasmic portion of the chain corresponds to 165–172 (RFSTYFPG). Residues 173 to 193 (YFDGQYWLWWVFLVLGFLLFL) traverse the membrane as a helical segment. The Extracellular portion of the chain corresponds to 194–221 (RGFINYAKVRKMPETFSNLPRTRVLFIY).

As to quaternary structure, forms heterodimers with NDFIP2. Interacts with several E3 ubiquitin-protein ligases, including ITCH, NEDD4, NEDD4L and WWP2. The interaction with NEDD4, NEDD4L and ITCH leads to relocalization of these proteins to exosomes and eventually to exosomal secretion. Interacts with U2SURP. Interacts with SLC11A2/DMT1. Interacts with PTEN. May interact with phosphorylated EGFR. Interacts with BRAT1. Interacts with KCNH2. Interacts with MAVS. Part of a complex containing ITCH, NDFIP1 and MAP3K7. Interacts (via N-terminus) with UBE2L3; the interaction mediates recruitment of UBE2L3 to ITCH. Ubiquitinated by NEDD4; mono-, di- and polyubiquitinated forms are detected. Ubiquitination regulates its degradation. Post-translationally, undergoes transient tyrosine phosphorylation following EGF stimulation, most probably by catalyzed by SRC. Phosphorylation SRC is enhanced in the presence of NDFIP2 which may act as a scaffold to recruit SRC to NDFIP1. As to expression, highly expressed in embryonic and early postnatal cortex (at protein level). Widely expressed. Hardly detectable in resting T-cells; up-regulated in T-cells in response to activation.

The protein resides in the endosome membrane. Its subcellular location is the golgi apparatus membrane. The protein localises to the synapse. It localises to the synaptosome. It is found in the cell projection. The protein resides in the dendrite. Its subcellular location is the secreted. In terms of biological role, activates HECT domain-containing E3 ubiquitin-protein ligases, including NEDD4 and ITCH, and consequently modulates the stability of their targets. As a result, controls many cellular processes. Prevents chronic T-helper cell-mediated inflammation by activating ITCH and thus controlling JUNB degradation. Promotes pancreatic beta cell death through degradation of JUNB and inhibition of the unfolded protein response, leading to reduction of insulin secretion. Restricts the production of pro-inflammatory cytokines in effector Th17 T-cells by promoting ITCH-mediated ubiquitination and degradation of RORC. Together with NDFIP2, limits the cytokine signaling and expansion of effector Th2 T-cells by promoting degradation of JAK1, probably by ITCH- and NEDD4L-mediated ubiquitination. Regulates peripheral T-cell tolerance to self and foreign antigens, forcing the exit of naive CD4+ T-cells from the cell cycle before they become effector T-cells. Negatively regulates RLR-mediated antiviral response by promoting SMURF1-mediated ubiquitination and subsequent degradation of MAVS. Negatively regulates KCNH2 potassium channel activity by decreasing its cell-surface expression and interfering with channel maturation through recruitment of NEDD4L to the Golgi apparatus where it mediates KCNH2 degradation. In cortical neurons, mediates the ubiquitination of the divalent metal transporter SLC11A2/DMT1 by NEDD4L, leading to its down-regulation and protection of the cells from cobalt and iron toxicity. Important for normal development of dendrites and dendritic spines in cortex. Enhances the ubiquitination of BRAT1 mediated by: NEDD4, NEDD4L and ITCH and is required for the nuclear localization of ubiquitinated BRAT1. Enhances the ITCH-mediated ubiquitination of MAP3K7 by recruiting E2 ubiquitin-conjugating enzyme UBE2L3 to ITCH. Modulates EGFR signaling through multiple pathways. In particular, may regulate the ratio of AKT1-to-MAPK8 signaling in response to EGF, acting on AKT1 probably through PTEN destabilization and on MAPK8 through ITCH-dependent MAP2K4 inactivation. As a result, may control cell growth rate. Inhibits cell proliferation by promoting PTEN nuclear localization and changing its signaling specificity. The polypeptide is NEDD4 family-interacting protein 1 (Ndfip1) (Mus musculus (Mouse)).